The following is a 158-amino-acid chain: Transcription elongation factor GreA (158 aa).

It belongs to the GreA/GreB family.

Necessary for efficient RNA polymerase transcription elongation past template-encoded arresting sites. The arresting sites in DNA have the property of trapping a certain fraction of elongating RNA polymerases that pass through, resulting in locked ternary complexes. Cleavage of the nascent transcript by cleavage factors such as GreA or GreB allows the resumption of elongation from the new 3'terminus. GreA releases sequences of 2 to 3 nucleotides. The chain is Transcription elongation factor GreA from Agrobacterium fabrum (strain C58 / ATCC 33970) (Agrobacterium tumefaciens (strain C58)).